An 851-amino-acid chain; its full sequence is DNA mismatch repair protein MutS (851 aa).

Residue 614–621 (GPNMGGKS) participates in ATP binding.

Belongs to the DNA mismatch repair MutS family.

This protein is involved in the repair of mismatches in DNA. It is possible that it carries out the mismatch recognition step. This protein has a weak ATPase activity. The polypeptide is DNA mismatch repair protein MutS (Yersinia pestis).